The following is a 347-amino-acid chain: Heat-inducible transcription repressor HrcA (347 aa).

This sequence belongs to the HrcA family.

Its function is as follows. Negative regulator of class I heat shock genes (grpE-dnaK-dnaJ and groELS operons). Prevents heat-shock induction of these operons. This Mycoplasmopsis pulmonis (strain UAB CTIP) (Mycoplasma pulmonis) protein is Heat-inducible transcription repressor HrcA.